Here is a 443-residue protein sequence, read N- to C-terminus: ATP-dependent protease ATPase subunit HslU (443 aa).

Residues I20, 62–67 (GVGKTE), D255, E321, and R393 each bind ATP.

Belongs to the ClpX chaperone family. HslU subfamily. As to quaternary structure, a double ring-shaped homohexamer of HslV is capped on each side by a ring-shaped HslU homohexamer. The assembly of the HslU/HslV complex is dependent on binding of ATP.

It localises to the cytoplasm. Functionally, ATPase subunit of a proteasome-like degradation complex; this subunit has chaperone activity. The binding of ATP and its subsequent hydrolysis by HslU are essential for unfolding of protein substrates subsequently hydrolyzed by HslV. HslU recognizes the N-terminal part of its protein substrates and unfolds these before they are guided to HslV for hydrolysis. The chain is ATP-dependent protease ATPase subunit HslU from Helicobacter pylori (strain ATCC 700392 / 26695) (Campylobacter pylori).